We begin with the raw amino-acid sequence, 644 residues long: Exoribonuclease 2 (644 aa).

In terms of domain architecture, RNB spans 189–516; the sequence is REDLTALNFV…NHRLLKAVIT (328 aa). The S1 motif domain occupies 561–643; the sequence is DIRFNAEIID…ETRGIVAKPA (83 aa).

Belongs to the RNR ribonuclease family. RNase II subfamily.

It localises to the cytoplasm. It carries out the reaction Exonucleolytic cleavage in the 3'- to 5'-direction to yield nucleoside 5'-phosphates.. Involved in mRNA degradation. Hydrolyzes single-stranded polyribonucleotides processively in the 3' to 5' direction. This is Exoribonuclease 2 from Pectobacterium atrosepticum (strain SCRI 1043 / ATCC BAA-672) (Erwinia carotovora subsp. atroseptica).